The following is a 407-amino-acid chain: Large ribosomal subunit protein uL4y (407 aa).

The segment at 57–96 (PYAVSKKAGHQTSAESWGTGRAVSRIPRVPGGGTHRAGQA) is disordered.

It belongs to the universal ribosomal protein uL4 family.

The chain is Large ribosomal subunit protein uL4y (RPL4D) from Arabidopsis thaliana (Mouse-ear cress).